The chain runs to 351 residues: C(7)-cyclitol 7-kinase (351 aa).

The protein belongs to the ROK (NagC/XylR) family.

The enzyme catalyses valienone + ATP = valienone 7-phosphate + ADP + H(+). It catalyses the reaction validone + ATP = validone 7-phosphate + ADP + H(+). Functionally, involved in the biosynthesis of the antifungal agent validamycin A. Catalyzes the phosphorylation of valienone and validone to their 7-phosphate derivatives. The chain is C(7)-cyclitol 7-kinase from Streptomyces hygroscopicus subsp. jinggangensis (strain 5008).